A 167-amino-acid chain; its full sequence is Phosphorelay intermediate protein YPD1 (167 aa).

Positions 24–129 (DSDFSKGLII…DDEEIKIQVD (106 aa)) constitute an HPt domain. His64 bears the Phosphohistidine mark.

It belongs to the YPD1 family. As to quaternary structure, interacts with the response regulatory domains of SLN1 and SSK1. Post-translationally, the phosphorelay mechanism involves the sequential transfer of a phosphate group from 'His-576' (H1) to 'Asp-1144' (D1) of SLN1, then to His-64 (H2) of YPD1 and finally to 'Asp-554' (D2) of SSK1 or 'Asp-427' (D2) of SKN7.

Its subcellular location is the cytoplasm. The protein localises to the nucleus. Phosphorelay intermediate protein that is part of the branched SLN1-YPD1-SKN7/SSK1 two-component regulatory system, which controls activity of the HOG1 pathway and gene expression in response to changes in the osmolarity of the extracellular environment. Catalyzes the phosphoryl group transfer from the membrane-bound osmosensing histidine kinase SLN1 to two distinct response regulator proteins, SSK1 in the cytoplasm, and transcription factor SKN7 in the nucleus. The sequence is that of Phosphorelay intermediate protein YPD1 (YPD1) from Saccharomyces cerevisiae (strain ATCC 204508 / S288c) (Baker's yeast).